A 256-amino-acid chain; its full sequence is Triosephosphate isomerase (256 aa).

9-11 (NWK) is a substrate binding site. The Electrophile role is filled by H95. E167 acts as the Proton acceptor in catalysis. Residues G173, S212, and 233–234 (GG) each bind substrate.

It belongs to the triosephosphate isomerase family. As to quaternary structure, homodimer.

The protein localises to the cytoplasm. It catalyses the reaction D-glyceraldehyde 3-phosphate = dihydroxyacetone phosphate. Its pathway is carbohydrate biosynthesis; gluconeogenesis. It functions in the pathway carbohydrate degradation; glycolysis; D-glyceraldehyde 3-phosphate from glycerone phosphate: step 1/1. In terms of biological role, involved in the gluconeogenesis. Catalyzes stereospecifically the conversion of dihydroxyacetone phosphate (DHAP) to D-glyceraldehyde-3-phosphate (G3P). This is Triosephosphate isomerase from Proteus mirabilis (strain HI4320).